The chain runs to 552 residues: Chaperonin GroEL 1 (552 aa).

ATP-binding positions include 30 to 33, lysine 51, 87 to 91, glycine 415, 479 to 481, and aspartate 495; these read TLGP, DGTTT, and NAA.

Belongs to the chaperonin (HSP60) family. Forms a cylinder of 14 subunits composed of two heptameric rings stacked back-to-back. Interacts with the co-chaperonin GroES.

The protein localises to the cytoplasm. The catalysed reaction is ATP + H2O + a folded polypeptide = ADP + phosphate + an unfolded polypeptide.. In terms of biological role, together with its co-chaperonin GroES, plays an essential role in assisting protein folding. The GroEL-GroES system forms a nano-cage that allows encapsulation of the non-native substrate proteins and provides a physical environment optimized to promote and accelerate protein folding. In Albidiferax ferrireducens (strain ATCC BAA-621 / DSM 15236 / T118) (Rhodoferax ferrireducens), this protein is Chaperonin GroEL 1.